An 87-amino-acid polypeptide reads, in one-letter code: Small ribosomal subunit protein bS18 (87 aa).

Over residues 1–10 (MAGKSSGDRR) the composition is skewed to basic and acidic residues. A disordered region spans residues 1–23 (MAGKSSGDRRKPLRGAKGGKNAA).

Belongs to the bacterial ribosomal protein bS18 family. Part of the 30S ribosomal subunit. Forms a tight heterodimer with protein bS6.

Its function is as follows. Binds as a heterodimer with protein bS6 to the central domain of the 16S rRNA, where it helps stabilize the platform of the 30S subunit. The polypeptide is Small ribosomal subunit protein bS18 (Clavibacter michiganensis subsp. michiganensis (strain NCPPB 382)).